The sequence spans 552 residues: Arginine--tRNA ligase (552 aa).

Positions 130-140 match the 'HIGH' region motif; it reads ANPTGPIHLGG.

It belongs to the class-I aminoacyl-tRNA synthetase family. As to quaternary structure, monomer.

Its subcellular location is the cytoplasm. The catalysed reaction is tRNA(Arg) + L-arginine + ATP = L-arginyl-tRNA(Arg) + AMP + diphosphate. In Nocardia farcinica (strain IFM 10152), this protein is Arginine--tRNA ligase.